Reading from the N-terminus, the 417-residue chain is Tyrosine--tRNA ligase (417 aa).

Y39 lines the L-tyrosine pocket. The 'HIGH' region signature appears at P44 to G53. 2 residues coordinate L-tyrosine: Y176 and Q180. The 'KMSKS' region signature appears at K236–S240. K239 provides a ligand contact to ATP. One can recognise an S4 RNA-binding domain in the interval I350 to A417.

This sequence belongs to the class-I aminoacyl-tRNA synthetase family. TyrS type 1 subfamily. In terms of assembly, homodimer.

It localises to the cytoplasm. The catalysed reaction is tRNA(Tyr) + L-tyrosine + ATP = L-tyrosyl-tRNA(Tyr) + AMP + diphosphate + H(+). Its function is as follows. Catalyzes the attachment of tyrosine to tRNA(Tyr) in a two-step reaction: tyrosine is first activated by ATP to form Tyr-AMP and then transferred to the acceptor end of tRNA(Tyr). The chain is Tyrosine--tRNA ligase from Brucella suis biovar 1 (strain 1330).